A 644-amino-acid polypeptide reads, in one-letter code: Methionine--tRNA ligase (644 aa).

The 'HIGH' region motif lies at 14–24; the sequence is YYPSAKLHIGN. Zn(2+) is bound by residues cysteine 129, cysteine 132, cysteine 146, and cysteine 149. The 'KMSKS' region motif lies at 299–303; that stretch reads KMSKS. Lysine 302 serves as a coordination point for ATP. The 103-residue stretch at 542-644 folds into the tRNA-binding domain; that stretch reads DVDKLDLRVV…EDIPTGSIVR (103 aa).

This sequence belongs to the class-I aminoacyl-tRNA synthetase family. MetG type 2A subfamily. As to quaternary structure, homodimer. Zn(2+) is required as a cofactor.

Its subcellular location is the cytoplasm. It carries out the reaction tRNA(Met) + L-methionine + ATP = L-methionyl-tRNA(Met) + AMP + diphosphate. In terms of biological role, is required not only for elongation of protein synthesis but also for the initiation of all mRNA translation through initiator tRNA(fMet) aminoacylation. This chain is Methionine--tRNA ligase (metG), found in Clostridium acetobutylicum (strain ATCC 824 / DSM 792 / JCM 1419 / IAM 19013 / LMG 5710 / NBRC 13948 / NRRL B-527 / VKM B-1787 / 2291 / W).